An 883-amino-acid chain; its full sequence is Alanine--tRNA ligase (883 aa).

Positions 560, 564, 665, and 669 each coordinate Zn(2+).

This sequence belongs to the class-II aminoacyl-tRNA synthetase family. It depends on Zn(2+) as a cofactor.

The protein localises to the cytoplasm. It catalyses the reaction tRNA(Ala) + L-alanine + ATP = L-alanyl-tRNA(Ala) + AMP + diphosphate. Catalyzes the attachment of alanine to tRNA(Ala) in a two-step reaction: alanine is first activated by ATP to form Ala-AMP and then transferred to the acceptor end of tRNA(Ala). Also edits incorrectly charged Ser-tRNA(Ala) and Gly-tRNA(Ala) via its editing domain. The polypeptide is Alanine--tRNA ligase (Mesomycoplasma hyopneumoniae (strain 7448) (Mycoplasma hyopneumoniae)).